A 198-amino-acid polypeptide reads, in one-letter code: MTINLILLSLLAYVIGSIPSGLWIGKIFYKKDIRDFGSGNLGATNSFRVLGIKAGSIVTVMDILKGTVATLLPFFFQLNVDHHFWLLTGAFAIIGHSFPLFAGFRGGKAVATSAGVILAYAPLLFVAALVVFLVTLKLSKYVSLSSMIGALAALIISLFMGDWILIILVACIALFVIWRHRANITRIRNGEEPKIKWM.

A run of 5 helical transmembrane segments spans residues 5–25 (LILL…LWIG), 56–76 (SIVT…PFFF), 84–104 (FWLL…FAGF), 114–134 (AGVI…VFLV), and 158–178 (LFMG…FVIW).

This sequence belongs to the PlsY family. As to quaternary structure, probably interacts with PlsX.

The protein resides in the cell membrane. The enzyme catalyses an acyl phosphate + sn-glycerol 3-phosphate = a 1-acyl-sn-glycero-3-phosphate + phosphate. It functions in the pathway lipid metabolism; phospholipid metabolism. Functionally, catalyzes the transfer of an acyl group from acyl-phosphate (acyl-PO(4)) to glycerol-3-phosphate (G3P) to form lysophosphatidic acid (LPA). This enzyme utilizes acyl-phosphate as fatty acyl donor, but not acyl-CoA or acyl-ACP. The chain is Glycerol-3-phosphate acyltransferase from Listeria monocytogenes serotype 4b (strain CLIP80459).